The chain runs to 159 residues: Small ribosomal subunit protein uS9 (159 aa).

It belongs to the universal ribosomal protein uS9 family.

The sequence is that of Small ribosomal subunit protein uS9 from Rickettsia conorii (strain ATCC VR-613 / Malish 7).